The primary structure comprises 356 residues: Histidinol-phosphate aminotransferase (356 aa).

The residue at position 214 (K214) is an N6-(pyridoxal phosphate)lysine.

The protein belongs to the class-II pyridoxal-phosphate-dependent aminotransferase family. Histidinol-phosphate aminotransferase subfamily. As to quaternary structure, homodimer. It depends on pyridoxal 5'-phosphate as a cofactor.

It carries out the reaction L-histidinol phosphate + 2-oxoglutarate = 3-(imidazol-4-yl)-2-oxopropyl phosphate + L-glutamate. Its pathway is amino-acid biosynthesis; L-histidine biosynthesis; L-histidine from 5-phospho-alpha-D-ribose 1-diphosphate: step 7/9. In Escherichia coli O17:K52:H18 (strain UMN026 / ExPEC), this protein is Histidinol-phosphate aminotransferase.